The following is a 260-amino-acid chain: Thymidylate synthase (260 aa).

Arg21 contacts dUMP. His51 provides a ligand contact to (6R)-5,10-methylene-5,6,7,8-tetrahydrofolate. Residue 122-123 coordinates dUMP; that stretch reads RR. The Nucleophile role is filled by Cys142. Residues 162 to 165, Asn173, and 203 to 205 contribute to the dUMP site; these read RSAD and HLY. Asp165 contacts (6R)-5,10-methylene-5,6,7,8-tetrahydrofolate. A (6R)-5,10-methylene-5,6,7,8-tetrahydrofolate-binding site is contributed by Ala259.

Belongs to the thymidylate synthase family. Bacterial-type ThyA subfamily. Homodimer.

It is found in the cytoplasm. It catalyses the reaction dUMP + (6R)-5,10-methylene-5,6,7,8-tetrahydrofolate = 7,8-dihydrofolate + dTMP. It participates in pyrimidine metabolism; dTTP biosynthesis. Catalyzes the reductive methylation of 2'-deoxyuridine-5'-monophosphate (dUMP) to 2'-deoxythymidine-5'-monophosphate (dTMP) while utilizing 5,10-methylenetetrahydrofolate (mTHF) as the methyl donor and reductant in the reaction, yielding dihydrofolate (DHF) as a by-product. This enzymatic reaction provides an intracellular de novo source of dTMP, an essential precursor for DNA biosynthesis. In Methylococcus capsulatus (strain ATCC 33009 / NCIMB 11132 / Bath), this protein is Thymidylate synthase.